We begin with the raw amino-acid sequence, 1319 residues long: Protein Jumonji (1319 aa).

Residues 1–11 (MSKERPKRNII) are compositionally biased toward basic residues. Disordered regions lie at residues 1 to 23 (MSKE…GMPW), 50 to 130 (DGID…PSLP), 173 to 265 (DEED…NTNG), 351 to 382 (YSNN…QSIN), 396 to 478 (HKMT…KALN), 499 to 537 (PIQK…PKRA), and 549 to 599 (QQRA…RSRA). Positions 61–70 (ASLSNGQLNG) are enriched in polar residues. The span at 74 to 88 (GHKEDGSRSQRKDGG) shows a compositional bias: basic and acidic residues. A Nuclear localization signal motif is present at residues 96-102 (PAKKRPR). Basic residues predominate over residues 98–107 (KKRPRLHAQR). Residues 109-121 (FAQSQPNSPSNTP) are compositionally biased toward polar residues. Over residues 173–185 (DEEDLEDEDEIEE) the composition is skewed to acidic residues. The span at 191 to 200 (VASTSCQSTP) shows a compositional bias: polar residues. The segment covering 221–251 (KDKELTPRSKARESSVGRDRSERCDESEISH) has biased composition (basic and acidic residues). Residues 372 to 382 (LSHSGKAQSIN) show a composition bias toward polar residues. Basic and acidic residues predominate over residues 413-424 (SAREEEVVDRPV). A compositionally biased stretch (pro residues) spans 505 to 515 (PAPPPSPPAAP). Low complexity-rich tracts occupy residues 516–525 (ASPSMPQNPA) and 554–570 (TNPT…ASKS). A compositionally biased stretch (basic and acidic residues) spans 583-598 (RLDRDRERERERERSR). Residues 607-648 (VPIFKPSSREFQDPLVYLDSFREQVESCGLCRVLPPTDWRPE) form the JmjN domain. Positions 671–779 (WGPNVQKLAC…FLLSYDLLSP (109 aa)) constitute an ARID domain. Basic and acidic residues predominate over residues 798–811 (RKRGPLEGHSDNGH). Positions 798 to 818 (RKRGPLEGHSDNGHHSLALPR) are disordered. The GSGFP motif signature appears at 944–948 (GSGFP). A JmjC domain is found at 954–1118 (PFSKHGWNLT…LGYEAAKDLK (165 aa)).

It belongs to the JARID2 family. Associates with the PRC2 complex.

Its subcellular location is the nucleus. In terms of biological role, regulator of histone methyltransferase complexes that plays an essential role in embryonic development. Acts by modulating histone methyltransferase activity and promoting the recruitment of histone methyltransferase complexes to their target genes. Binds DNA and mediates the recruitment of the PRC2 complex to target genes in embryonic stem cells. Does not have histone demethylase activity but regulates activity of various histone methyltransferase complexes. In embryonic stem cells, it associates with the PRC2 complex and inhibits trimethylation of 'Lys-27' of histone H3 (H3K27me3) by the PRC2 complex, thereby playing a key role in differentiation of embryonic stem cells and normal development. This Danio rerio (Zebrafish) protein is Protein Jumonji (jarid2b).